The sequence spans 113 residues: Con-Ins G3 (113 aa).

Positions 1–21 are cleaved as a signal peptide; sequence MTTSFYFLLVALGLLLYVCQS. Residues 22–29 constitute a propeptide that is removed on maturation; sequence SFGNQHTR. 4-hydroxyproline; partial is present on Pro34. Cystine bridges form between Cys38–Cys99, Cys50–Cys112, and Cys98–Cys103. 4-carboxyglutamate is present on Glu41. Position 51 is a histidine amide (His51). Positions 52-92 are cleaved as a propeptide — c peptide; that stretch reads GKRNDAGKKRGRASPLWQRQGFLSMLKAKRNEAFFLQRDGR. Glu96 bears the 4-carboxyglutamate mark. At Pro102 the chain carries 4-hydroxyproline; partial.

It belongs to the insulin family. As to quaternary structure, heterodimer of A and B chains; disulfide-linked. It is noteworthy that in this dimer, in contrast to Con-Ins G1, the chain B is amidated and not the chain A. In terms of tissue distribution, expressed by the venom gland.

It localises to the secreted. Its function is as follows. This venom insulin, from a fish-hunting cone snail, facilitates prey capture by rapidly inducing hypoglycemic shock. It is one of the smallest known insulin found in nature and lacks the C-terminal segment of the B chain that, in human insulin, mediates engagement of the insulin receptor (INSR) and assembly of the hormone's hexameric storage form. Despite lacking this segment, it both binds and activates human insulin receptor (long isoform (HIR-B)) with a high potency (EC(50)=242 nM). In vivo, intraperitoneal injection of this peptide into zebrafish lowers blood glucose with a lower potency than human insulin. In addition, when applied to water, this peptide reduces overall locomotor activity of zebrafish larvae, observed as a significant decrease in the percentage of time spent swimming and movement frequency. When tested on a mouse model of diabetes, this insulin also lowers blood glucose with a 10-fold lower potency than human insulin. This is Con-Ins G3 from Conus geographus (Geography cone).